Consider the following 298-residue polypeptide: Probable endonuclease 4 (298 aa).

Zn(2+) contacts are provided by histidine 69, histidine 111, glutamate 146, aspartate 180, histidine 183, histidine 215, aspartate 228, histidine 230, and glutamate 260.

Belongs to the AP endonuclease 2 family. Zn(2+) is required as a cofactor.

It carries out the reaction Endonucleolytic cleavage to 5'-phosphooligonucleotide end-products.. Endonuclease IV plays a role in DNA repair. It cleaves phosphodiester bonds at apurinic or apyrimidinic (AP) sites, generating a 3'-hydroxyl group and a 5'-terminal sugar phosphate. This is Probable endonuclease 4 from Bacillus cereus (strain G9842).